We begin with the raw amino-acid sequence, 107 residues long: Large ribosomal subunit protein uL24 (107 aa).

It belongs to the universal ribosomal protein uL24 family. Part of the 50S ribosomal subunit.

Functionally, one of two assembly initiator proteins, it binds directly to the 5'-end of the 23S rRNA, where it nucleates assembly of the 50S subunit. In terms of biological role, one of the proteins that surrounds the polypeptide exit tunnel on the outside of the subunit. This chain is Large ribosomal subunit protein uL24, found in Thermoanaerobacter pseudethanolicus (strain ATCC 33223 / 39E) (Clostridium thermohydrosulfuricum).